Reading from the N-terminus, the 59-residue chain is Photosystem II reaction center protein K (59 aa).

A propeptide spanning residues 1–22 is cleaved from the precursor; sequence MLNIFSLICLSSALHSSSFFFA. The chain crosses the membrane as a helical span at residues 38-58; the sequence is MPVIPVLFFLLALVWQAAVSF.

It belongs to the PsbK family. In terms of assembly, PSII is composed of 1 copy each of membrane proteins PsbA, PsbB, PsbC, PsbD, PsbE, PsbF, PsbH, PsbI, PsbJ, PsbK, PsbL, PsbM, PsbT, PsbX, PsbY, PsbZ, Psb30/Ycf12, at least 3 peripheral proteins of the oxygen-evolving complex and a large number of cofactors. It forms dimeric complexes.

Its subcellular location is the plastid. It localises to the chloroplast thylakoid membrane. In terms of biological role, one of the components of the core complex of photosystem II (PSII). PSII is a light-driven water:plastoquinone oxidoreductase that uses light energy to abstract electrons from H(2)O, generating O(2) and a proton gradient subsequently used for ATP formation. It consists of a core antenna complex that captures photons, and an electron transfer chain that converts photonic excitation into a charge separation. In Piper cenocladum (Ant piper), this protein is Photosystem II reaction center protein K.